The primary structure comprises 319 residues: Curved DNA-binding protein (319 aa).

Residues 5–69 (DYYKILGVEP…QKRAEFDEIR (65 aa)) form the J domain.

It is found in the cytoplasm. The protein localises to the nucleoid. Its function is as follows. DNA-binding protein that preferentially recognizes a curved DNA sequence. It is probably a functional analog of DnaJ; displays overlapping activities with DnaJ, but functions under different conditions, probably acting as a molecular chaperone in an adaptive response to environmental stresses other than heat shock. Lacks autonomous chaperone activity; binds native substrates and targets them for recognition by DnaK. Its activity is inhibited by the binding of CbpM. This chain is Curved DNA-binding protein, found in Pseudomonas putida (strain ATCC 700007 / DSM 6899 / JCM 31910 / BCRC 17059 / LMG 24140 / F1).